The chain runs to 121 residues: Histone H2B.6 (121 aa).

The tract at residues 1 to 28 (MAPKAEKKPKVEKRVPGKEGETSKKKAK) is disordered. N6-acetyllysine is present on residues K7 and K13.

It belongs to the histone H2B family. In terms of assembly, the nucleosome is a histone octamer containing two molecules each of H2A, H2B, H3 and H4 assembled in one H3-H4 heterotetramer and two H2A-H2B heterodimers. The octamer wraps approximately 147 bp of DNA. In terms of processing, can be acetylated to form H2BK6ac and H2BK33ac. As to expression, expressed preferentially in meristematic tissues.

It localises to the nucleus. The protein localises to the chromosome. Its function is as follows. Core component of nucleosome. Nucleosomes wrap and compact DNA into chromatin, limiting DNA accessibility to the cellular machineries which require DNA as a template. Histones thereby play a central role in transcription regulation, DNA repair, DNA replication and chromosomal stability. DNA accessibility is regulated via a complex set of post-translational modifications of histones, also called histone code, and nucleosome remodeling. This chain is Histone H2B.6 (TH123), found in Triticum aestivum (Wheat).